Reading from the N-terminus, the 241-residue chain is uncharacterized protein (241 aa).

7 helical membrane passes run 12 to 32 (ITEI…LLLL), 39 to 59 (LLWL…EMKF), 89 to 109 (VYDV…ICYT), 117 to 137 (YYTF…NCVV), 152 to 172 (LFEY…ATML), 180 to 200 (IHFY…WFVY), and 215 to 235 (YVEA…SPLI).

Belongs to the mimivirus L68/R809 family.

It is found in the membrane. This is an uncharacterized protein from Acanthamoeba polyphaga mimivirus (APMV).